Here is a 120-residue protein sequence, read N- to C-terminus: Spermidine export protein MdtJ (120 aa).

A run of 4 helical transmembrane segments spans residues 1-21 (MFYW…TLSM), 31-51 (TGFI…SFAV), 54-74 (IALG…ITLF), and 81-101 (EALS…IALI).

The protein belongs to the drug/metabolite transporter (DMT) superfamily. Small multidrug resistance (SMR) (TC 2.A.7.1) family. MdtJ subfamily. Forms a complex with MdtI.

The protein resides in the cell inner membrane. Catalyzes the excretion of spermidine. The sequence is that of Spermidine export protein MdtJ from Citrobacter koseri (strain ATCC BAA-895 / CDC 4225-83 / SGSC4696).